A 258-amino-acid polypeptide reads, in one-letter code: Mitochondrial distribution and morphology protein 12 (258 aa).

Positions 1–233 (MSFDIHWSNL…WPSWIELDFN (233 aa)) constitute an SMP-LTD domain. The disordered stretch occupies residues 238 to 258 (EDLQQSKDTPTTANTGTTTTN). Residues 246-258 (TPTTANTGTTTTN) are compositionally biased toward low complexity.

Belongs to the MDM12 family. In terms of assembly, component of the ER-mitochondria encounter structure (ERMES) or MDM complex, composed of MMM1, MDM10, MDM12 and MDM34. An MMM1 homodimer associates with one molecule of MDM12 on each side in a pairwise head-to-tail manner, and the SMP-LTD domains of MMM1 and MDM12 generate a continuous hydrophobic tunnel for phospholipid trafficking.

It localises to the mitochondrion outer membrane. Its subcellular location is the endoplasmic reticulum membrane. Its function is as follows. Component of the ERMES/MDM complex, which serves as a molecular tether to connect the endoplasmic reticulum (ER) and mitochondria. Components of this complex are involved in the control of mitochondrial shape and protein biogenesis, and function in nonvesicular lipid trafficking between the ER and mitochondria. MDM12 is required for the interaction of the ER-resident membrane protein MMM1 and the outer mitochondrial membrane-resident beta-barrel protein MDM10. The MDM12-MMM1 subcomplex functions in the major beta-barrel assembly pathway that is responsible for biogenesis of all mitochondrial outer membrane beta-barrel proteins, and acts in a late step after the SAM complex. The MDM10-MDM12-MMM1 subcomplex further acts in the TOM40-specific pathway after the action of the MDM12-MMM1 complex. Essential for establishing and maintaining the structure of mitochondria and maintenance of mtDNA nucleoids. The sequence is that of Mitochondrial distribution and morphology protein 12 from Zygosaccharomyces rouxii (strain ATCC 2623 / CBS 732 / NBRC 1130 / NCYC 568 / NRRL Y-229).